The primary structure comprises 265 residues: 4-hydroxy-tetrahydrodipicolinate reductase (265 aa).

NAD(+) is bound by residues 7 to 12 (GASGRM) and Asp-33. Position 34 (Arg-34) interacts with NADP(+). NAD(+) contacts are provided by residues 96–98 (GTT) and 120–123 (AANM). His-153 functions as the Proton donor/acceptor in the catalytic mechanism. (S)-2,3,4,5-tetrahydrodipicolinate is bound at residue His-154. Lys-157 serves as the catalytic Proton donor. (S)-2,3,4,5-tetrahydrodipicolinate is bound at residue 163–164 (GT).

This sequence belongs to the DapB family.

Its subcellular location is the cytoplasm. It catalyses the reaction (S)-2,3,4,5-tetrahydrodipicolinate + NAD(+) + H2O = (2S,4S)-4-hydroxy-2,3,4,5-tetrahydrodipicolinate + NADH + H(+). The enzyme catalyses (S)-2,3,4,5-tetrahydrodipicolinate + NADP(+) + H2O = (2S,4S)-4-hydroxy-2,3,4,5-tetrahydrodipicolinate + NADPH + H(+). Its pathway is amino-acid biosynthesis; L-lysine biosynthesis via DAP pathway; (S)-tetrahydrodipicolinate from L-aspartate: step 4/4. Its function is as follows. Catalyzes the conversion of 4-hydroxy-tetrahydrodipicolinate (HTPA) to tetrahydrodipicolinate. The sequence is that of 4-hydroxy-tetrahydrodipicolinate reductase from Burkholderia ambifaria (strain MC40-6).